A 258-amino-acid polypeptide reads, in one-letter code: Hydroxyacylglutathione hydrolase (258 aa).

Zn(2+) is bound by residues histidine 52, histidine 54, aspartate 56, histidine 57, histidine 109, aspartate 126, and histidine 164.

Belongs to the metallo-beta-lactamase superfamily. Glyoxalase II family. In terms of assembly, monomer. Requires Zn(2+) as cofactor.

It catalyses the reaction an S-(2-hydroxyacyl)glutathione + H2O = a 2-hydroxy carboxylate + glutathione + H(+). Its pathway is secondary metabolite metabolism; methylglyoxal degradation; (R)-lactate from methylglyoxal: step 2/2. Its function is as follows. Thiolesterase that catalyzes the hydrolysis of S-D-lactoyl-glutathione to form glutathione and D-lactic acid. In Xylella fastidiosa (strain 9a5c), this protein is Hydroxyacylglutathione hydrolase.